A 148-amino-acid chain; its full sequence is 3-hydroxyacyl-[acyl-carrier-protein] dehydratase FabZ (148 aa).

The active site involves His55.

It belongs to the thioester dehydratase family. FabZ subfamily.

It is found in the cytoplasm. It catalyses the reaction a (3R)-hydroxyacyl-[ACP] = a (2E)-enoyl-[ACP] + H2O. In terms of biological role, involved in unsaturated fatty acids biosynthesis. Catalyzes the dehydration of short chain beta-hydroxyacyl-ACPs and long chain saturated and unsaturated beta-hydroxyacyl-ACPs. This is 3-hydroxyacyl-[acyl-carrier-protein] dehydratase FabZ from Haemophilus influenzae (strain ATCC 51907 / DSM 11121 / KW20 / Rd).